We begin with the raw amino-acid sequence, 556 residues long: M-phase inducer phosphatase (556 aa).

Disordered regions lie at residues 165–186 and 257–297; these read STDG…QERR and TSGL…RPRK. Residues 287 to 297 are compositionally biased toward basic residues; sequence KSAHPNMRPRK. Residues 371-474 form the Rhodanese domain; the sequence is MFDNIMIIDC…FFAEHRSLCY (104 aa). Residue C421 is part of the active site. Positions 505-516 are enriched in polar residues; that stretch reads RAQTFAFGQQSP. The segment at 505-556 is disordered; that stretch reads RAQTFAFGQQSPEMEDSPTGRCRNNPGDRKLLASPFNDSPGSRFPGRRMLSY.

This sequence belongs to the MPI phosphatase family.

It carries out the reaction O-phospho-L-tyrosyl-[protein] + H2O = L-tyrosyl-[protein] + phosphate. In terms of biological role, this protein functions as a dosage-dependent inducer in mitotic control. It is a tyrosine protein phosphatase required for progression of the cell cycle. It may directly dephosphorylate p34(cdc2) and activate the p34(cdc2) kinase activity. The chain is M-phase inducer phosphatase (nimT) from Emericella nidulans (strain FGSC A4 / ATCC 38163 / CBS 112.46 / NRRL 194 / M139) (Aspergillus nidulans).